Reading from the N-terminus, the 55-residue chain is Large ribosomal subunit protein bL33A (55 aa).

The protein belongs to the bacterial ribosomal protein bL33 family.

The protein is Large ribosomal subunit protein bL33A of Mycolicibacterium vanbaalenii (strain DSM 7251 / JCM 13017 / BCRC 16820 / KCTC 9966 / NRRL B-24157 / PYR-1) (Mycobacterium vanbaalenii).